A 559-amino-acid polypeptide reads, in one-letter code: MWTNFFKLRLFCCLLAVLMVVVLVINVTQVEYLDHETVSATFIDSSGQFVSSQVTGISRNPYCGYDQQTLSSQERMEEDSLLAALHRQVPDVGPVPFVKSTDPSSSYFVILNSAAFFKVGSQLEVLVHVQDFQRKPKKYGGDYLQARIHSLKLQAGAVGRVVDYQNGFYKVFFTLLWPGKVKVSVSLVHPSEGIRVLQRLQEDKPDRVYFKSLFRSGRISETTECNVCLPGNLPLCNFTDLYTGEPWFCFKPKKLPCSSRITHFKGGYLKGLLTAAESAFFQSGVNIKMPVNSSGPDWVTVIPRRIKETNSLELSQGSGTFPSGYYYKDQWRPRKFKMRQFNDPDNITECLQRKVVHLFGDSTIRQWFEYLTTFVPDLVEFNLGSPKNVGPFLAVDQKHNILLKYRCHGPPIRFTTVFSNELHYVANELNGIVGGKNTVVAIAVWSHFSTFPLEVYIRRLRNIRRAVVRLLDRSPKTVVVIRTANAQELGPEVSLFNSDWYNFQLDTILRRMFSGVGVYLVDAWEMTLAHYLPHKLHPDEVIVKNQLDMFLSFVCPLET.

Residues 1–30 (MWTNFFKLRLFCCLLAVLMVVVLVINVTQV) form the signal peptide. 3 N-linked (GlcNAc...) asparagine glycosylation sites follow: asparagine 237, asparagine 292, and asparagine 346.

It belongs to the NXPE family.

It is found in the secreted. The sequence is that of NXPE family member 3 (NXPE3) from Homo sapiens (Human).